The primary structure comprises 356 residues: tRNA N6-adenosine threonylcarbamoyltransferase (356 aa).

Fe cation-binding residues include His111 and His115. Substrate is bound by residues 143–147 (LASGG), Asp178, Gly191, Asp195, and Asn286. Asp314 serves as a coordination point for Fe cation.

Belongs to the KAE1 / TsaD family. It depends on Fe(2+) as a cofactor.

It is found in the cytoplasm. The enzyme catalyses L-threonylcarbamoyladenylate + adenosine(37) in tRNA = N(6)-L-threonylcarbamoyladenosine(37) in tRNA + AMP + H(+). In terms of biological role, required for the formation of a threonylcarbamoyl group on adenosine at position 37 (t(6)A37) in tRNAs that read codons beginning with adenine. Is involved in the transfer of the threonylcarbamoyl moiety of threonylcarbamoyl-AMP (TC-AMP) to the N6 group of A37, together with TsaE and TsaB. TsaD likely plays a direct catalytic role in this reaction. This chain is tRNA N6-adenosine threonylcarbamoyltransferase, found in Sorangium cellulosum (strain So ce56) (Polyangium cellulosum (strain So ce56)).